We begin with the raw amino-acid sequence, 228 residues long: UPF0173 metal-dependent hydrolase Smar_0891 (228 aa).

The protein belongs to the UPF0173 family.

The sequence is that of UPF0173 metal-dependent hydrolase Smar_0891 from Staphylothermus marinus (strain ATCC 43588 / DSM 3639 / JCM 9404 / F1).